Consider the following 243-residue polypeptide: Protein-L-isoaspartate O-methyltransferase (243 aa).

Residue Ser-87 is part of the active site.

The protein belongs to the methyltransferase superfamily. L-isoaspartyl/D-aspartyl protein methyltransferase family.

The protein localises to the cytoplasm. It catalyses the reaction [protein]-L-isoaspartate + S-adenosyl-L-methionine = [protein]-L-isoaspartate alpha-methyl ester + S-adenosyl-L-homocysteine. In terms of biological role, catalyzes the methyl esterification of L-isoaspartyl residues in peptides and proteins that result from spontaneous decomposition of normal L-aspartyl and L-asparaginyl residues. It plays a role in the repair and/or degradation of damaged proteins. The chain is Protein-L-isoaspartate O-methyltransferase from Methanosarcina mazei (strain ATCC BAA-159 / DSM 3647 / Goe1 / Go1 / JCM 11833 / OCM 88) (Methanosarcina frisia).